The following is a 295-amino-acid chain: Pyridoxal 5'-phosphate synthase subunit PdxS (295 aa).

Asp-25 lines the D-ribose 5-phosphate pocket. The active-site Schiff-base intermediate with D-ribose 5-phosphate is the Lys-82. Gly-154 is a D-ribose 5-phosphate binding site. Position 166 (Arg-166) interacts with D-glyceraldehyde 3-phosphate. D-ribose 5-phosphate is bound by residues Gly-215 and 236–237 (GS).

This sequence belongs to the PdxS/SNZ family. In the presence of PdxT, forms a dodecamer of heterodimers.

It catalyses the reaction aldehydo-D-ribose 5-phosphate + D-glyceraldehyde 3-phosphate + L-glutamine = pyridoxal 5'-phosphate + L-glutamate + phosphate + 3 H2O + H(+). It participates in cofactor biosynthesis; pyridoxal 5'-phosphate biosynthesis. Its function is as follows. Catalyzes the formation of pyridoxal 5'-phosphate from ribose 5-phosphate (RBP), glyceraldehyde 3-phosphate (G3P) and ammonia. The ammonia is provided by the PdxT subunit. Can also use ribulose 5-phosphate and dihydroxyacetone phosphate as substrates, resulting from enzyme-catalyzed isomerization of RBP and G3P, respectively. This chain is Pyridoxal 5'-phosphate synthase subunit PdxS, found in Bacillus cereus (strain Q1).